The sequence spans 161 residues: uncharacterized protein (161 aa).

A helical membrane pass occupies residues 30–50 (GVILFRLLGVILFRLLGVILF).

It is found in the membrane. This is an uncharacterized protein from Homo sapiens (Human).